The following is a 714-amino-acid chain: Polyribonucleotide nucleotidyltransferase (714 aa).

Mg(2+) contacts are provided by D488 and D494. A KH domain is found at 555–614 (PRIEVMNIPTDKIRDVIGSGGKVIREIVEKTGAKINIEDDGTVKIASSNGKEIEAAKKWI). Residues 624 to 692 (GEIYEGTVVK…ERGKVRLSMK (69 aa)) enclose the S1 motif domain.

The protein belongs to the polyribonucleotide nucleotidyltransferase family. Mg(2+) is required as a cofactor.

Its subcellular location is the cytoplasm. The catalysed reaction is RNA(n+1) + phosphate = RNA(n) + a ribonucleoside 5'-diphosphate. Its function is as follows. Involved in mRNA degradation. Catalyzes the phosphorolysis of single-stranded polyribonucleotides processively in the 3'- to 5'-direction. The chain is Polyribonucleotide nucleotidyltransferase from Brucella melitensis biotype 2 (strain ATCC 23457).